A 234-amino-acid polypeptide reads, in one-letter code: UDP-2,3-diacylglucosamine hydrolase (234 aa).

Residues Asp9, His11, Asp42, Asn80, and His115 each coordinate Mn(2+). Residue Asn80–Arg81 coordinates substrate. Substrate contacts are provided by Asp123, Ser161, Lys165, Lys168, and His196. Mn(2+) is bound by residues His196 and His198.

Belongs to the LpxH family. Requires Mn(2+) as cofactor.

The protein resides in the cell inner membrane. The catalysed reaction is UDP-2-N,3-O-bis[(3R)-3-hydroxytetradecanoyl]-alpha-D-glucosamine + H2O = 2-N,3-O-bis[(3R)-3-hydroxytetradecanoyl]-alpha-D-glucosaminyl 1-phosphate + UMP + 2 H(+). Its pathway is glycolipid biosynthesis; lipid IV(A) biosynthesis; lipid IV(A) from (3R)-3-hydroxytetradecanoyl-[acyl-carrier-protein] and UDP-N-acetyl-alpha-D-glucosamine: step 4/6. Functionally, hydrolyzes the pyrophosphate bond of UDP-2,3-diacylglucosamine to yield 2,3-diacylglucosamine 1-phosphate (lipid X) and UMP by catalyzing the attack of water at the alpha-P atom. Involved in the biosynthesis of lipid A, a phosphorylated glycolipid that anchors the lipopolysaccharide to the outer membrane of the cell. In Haemophilus ducreyi (strain 35000HP / ATCC 700724), this protein is UDP-2,3-diacylglucosamine hydrolase.